The following is an 883-amino-acid chain: Translation initiation factor IF-2 (883 aa).

Disordered stretches follow at residues 1 to 96 (MVDT…RSGM) and 132 to 259 (QRRA…RGRL). A compositionally biased stretch (low complexity) spans 57–66 (PAEPAAAAPE). The segment covering 72 to 87 (TPAPPAVSPRQQPRPS) has biased composition (pro residues). Basic and acidic residues predominate over residues 132–188 (QRRAAQELVDKAEREAAEVRRKAEEERHRHEEETKRKAETEAKKRFGEAEPAKKPAD). The span at 191 to 217 (PASTSTTTTAPRAPVTTTTRPPAVAAE) shows a compositional bias: low complexity. In terms of domain architecture, tr-type G spans 380–551 (PRSPVVTVMG…ALQAELLDLK (172 aa)). Residues 389-396 (GHVDHGKT) are G1. 389 to 396 (GHVDHGKT) contacts GTP. The segment at 414-418 (GITQH) is G2. The G3 stretch occupies residues 437–440 (DTPG). GTP-binding positions include 437 to 441 (DTPGH) and 491 to 494 (NKID). Residues 491 to 494 (NKID) are G4. Positions 527 to 529 (SAK) are G5.

The protein belongs to the TRAFAC class translation factor GTPase superfamily. Classic translation factor GTPase family. IF-2 subfamily.

The protein resides in the cytoplasm. Functionally, one of the essential components for the initiation of protein synthesis. Protects formylmethionyl-tRNA from spontaneous hydrolysis and promotes its binding to the 30S ribosomal subunits. Also involved in the hydrolysis of GTP during the formation of the 70S ribosomal complex. In Rhodopseudomonas palustris (strain BisB5), this protein is Translation initiation factor IF-2.